Consider the following 500-residue polypeptide: Glycerol kinase (500 aa).

T13 provides a ligand contact to ADP. ATP contacts are provided by T13, T14, and S15. Position 13 (T13) interacts with sn-glycerol 3-phosphate. ADP is bound at residue R17. 4 residues coordinate sn-glycerol 3-phosphate: R83, E84, Y135, and D244. Positions 83, 84, 135, 244, and 245 each coordinate glycerol. ADP contacts are provided by T266 and G309. Residues T266, G309, Q313, and G410 each coordinate ATP. The ADP site is built by G410 and N414.

This sequence belongs to the FGGY kinase family.

The catalysed reaction is glycerol + ATP = sn-glycerol 3-phosphate + ADP + H(+). The protein operates within polyol metabolism; glycerol degradation via glycerol kinase pathway; sn-glycerol 3-phosphate from glycerol: step 1/1. Its activity is regulated as follows. Inhibited by fructose 1,6-bisphosphate (FBP). In terms of biological role, key enzyme in the regulation of glycerol uptake and metabolism. Catalyzes the phosphorylation of glycerol to yield sn-glycerol 3-phosphate. This Burkholderia ambifaria (strain ATCC BAA-244 / DSM 16087 / CCUG 44356 / LMG 19182 / AMMD) (Burkholderia cepacia (strain AMMD)) protein is Glycerol kinase.